Reading from the N-terminus, the 286-residue chain is 4-diphosphocytidyl-2-C-methyl-D-erythritol kinase (286 aa).

Residue lysine 11 is part of the active site. 94-104 provides a ligand contact to ATP; it reads PMGGGIGGGSS. Aspartate 136 is an active-site residue.

This sequence belongs to the GHMP kinase family. IspE subfamily.

It catalyses the reaction 4-CDP-2-C-methyl-D-erythritol + ATP = 4-CDP-2-C-methyl-D-erythritol 2-phosphate + ADP + H(+). The protein operates within isoprenoid biosynthesis; isopentenyl diphosphate biosynthesis via DXP pathway; isopentenyl diphosphate from 1-deoxy-D-xylulose 5-phosphate: step 3/6. Catalyzes the phosphorylation of the position 2 hydroxy group of 4-diphosphocytidyl-2C-methyl-D-erythritol. This is 4-diphosphocytidyl-2-C-methyl-D-erythritol kinase from Pseudomonas putida (strain ATCC 700007 / DSM 6899 / JCM 31910 / BCRC 17059 / LMG 24140 / F1).